The primary structure comprises 148 residues: Male-specific protein scotti (148 aa).

The interval 56 to 78 is disordered; that stretch reads PQEPPLGVFPAQGGPNGPPRLRK. N-linked (GlcNAc...) asparagine glycosylation occurs at N129.

The protein belongs to the male-specific scotti family.

Its function is as follows. Post-meiotically transcribed gene that has a role in late spermiogenesis; required for actin cone progression during spermatid individualization. The sequence is that of Male-specific protein scotti from Drosophila sechellia (Fruit fly).